We begin with the raw amino-acid sequence, 185 residues long: MAGKLTLIVGPMYSGKTTELLSYVEIYRLGRKKTIVFKPSLDNRYGVDCVKTHAGVEVEAIAVEKSADAMKYIKQPVDAVFVDEVQFFDKDLVKIVRQLLDQDVDIFCAGLDMTFKQNPFETTMLLMSLANEIIKKKAVCHICGEYNATLTYKFVQDDSEIDIGGKEKYIAVCRDCYNKVASKND.

ATP-binding positions include 10 to 17 (GPMYSGKT) and 83 to 86 (DEVQ). Catalysis depends on Glu-84, which acts as the Proton acceptor. Residues Cys-140, Cys-143, Cys-173, and Cys-176 each coordinate Zn(2+).

It belongs to the thymidine kinase family. As to quaternary structure, homotetramer.

The protein resides in the cytoplasm. The catalysed reaction is thymidine + ATP = dTMP + ADP + H(+). This is Thymidine kinase from Pseudothermotoga lettingae (strain ATCC BAA-301 / DSM 14385 / NBRC 107922 / TMO) (Thermotoga lettingae).